A 473-amino-acid chain; its full sequence is UDP-N-acetylmuramate--L-alanine ligase (473 aa).

Position 112–118 (112–118 (GTHGKTT)) interacts with ATP.

Belongs to the MurCDEF family.

The protein resides in the cytoplasm. The enzyme catalyses UDP-N-acetyl-alpha-D-muramate + L-alanine + ATP = UDP-N-acetyl-alpha-D-muramoyl-L-alanine + ADP + phosphate + H(+). It functions in the pathway cell wall biogenesis; peptidoglycan biosynthesis. Cell wall formation. This Nitrosomonas europaea (strain ATCC 19718 / CIP 103999 / KCTC 2705 / NBRC 14298) protein is UDP-N-acetylmuramate--L-alanine ligase.